Here is a 205-residue protein sequence, read N- to C-terminus: uncharacterized protein (205 aa).

Belongs to the flavoredoxin family. It depends on FMN as a cofactor.

This is an uncharacterized protein from Bacillus subtilis (strain 168).